A 299-amino-acid polypeptide reads, in one-letter code: Probable lipid kinase YegS (299 aa).

Residues 2–133 (AEFPASLLIL…IDMAQVNKQT (132 aa)) enclose the DAGKc domain. ATP contacts are provided by residues Thr-40, 66–72 (GDGTINE), and Thr-95. The Mg(2+) site is built by Leu-215, Asp-218, and Leu-220. The active-site Proton acceptor is the Glu-271.

This sequence belongs to the diacylglycerol/lipid kinase family. YegS lipid kinase subfamily. Requires Mg(2+) as cofactor. It depends on Ca(2+) as a cofactor.

It is found in the cytoplasm. In terms of biological role, probably phosphorylates lipids; the in vivo substrate is unknown. The sequence is that of Probable lipid kinase YegS from Escherichia coli O45:K1 (strain S88 / ExPEC).